The chain runs to 469 residues: Cysteine protease ATG4 (469 aa).

A disordered region spans residues K48–S99. Positions A66 to D75 are enriched in basic and acidic residues. Pro residues predominate over residues P79–P90. C172 (nucleophile) is an active-site residue. Catalysis depends on residues D362 and H364. A disordered region spans residues G443–A469. Acidic residues predominate over residues I452–T463.

The protein belongs to the peptidase C54 family. In terms of assembly, interacts with ATG8.

The protein localises to the cytoplasm. Its subcellular location is the nucleus. It is found in the preautophagosomal structure. The enzyme catalyses [protein]-C-terminal L-amino acid-glycyl-phosphatidylethanolamide + H2O = [protein]-C-terminal L-amino acid-glycine + a 1,2-diacyl-sn-glycero-3-phosphoethanolamine. Cysteine protease that plays a key role in cytoplasm to vacuole transport (Cvt) and autophagy by mediating both proteolytic activation and delipidation of ATG8. Required for selective autophagic degradation of the nucleus (nucleophagy) as well as for mitophagy which contributes to regulate mitochondrial quantity and quality by eliminating the mitochondria to a basal level to fulfill cellular energy requirements and preventing excess ROS production. The protease activity is required for proteolytic activation of ATG8: cleaves the C-terminal amino acid of ATG8 to reveal a C-terminal glycine. ATG8 ubiquitin-like activity requires the exposure of the glycine at the C-terminus for its conjugation to phosphatidylethanolamine (PE) and its insertion to membranes, which is necessary for autophagy. The ATG8-PE conjugate mediates tethering between adjacent membranes and stimulates membrane hemifusion, leading to expansion of the autophagosomal membrane during autophagy. In addition to the protease activity, also catalyzes deconjugation of PE-conjugated forms of ATG8 during macroautophagy: ATG8 delipidation is required to release the protein from membranes, which facilitates multiple events during macroautophagy, and especially for efficient autophagosome biogenesis, the assembly of ATG9-containing tubulovesicular clusters into phagophores/autophagosomes, and for the disassembly of PAS-associated ATG components. ATG8 delipidation by ATG4 also recycles ATG8-PE generated on inappropriate membranes to maintain a reservoir of unlipidated ATG8 that is required for autophagosome formation at the PAS. Autophagy is required for proper vegetative growth, asexual/sexual reproduction, and full virulence. Autophagy is particularly involved in the biosynthesis of deoxynivalenol (DON), an important virulence determinant. This chain is Cysteine protease ATG4, found in Gibberella zeae (strain ATCC MYA-4620 / CBS 123657 / FGSC 9075 / NRRL 31084 / PH-1) (Wheat head blight fungus).